Reading from the N-terminus, the 457-residue chain is Glycoprotein endo-alpha-1,2-mannosidase-like protein (457 aa).

Residues 1 to 8 are Cytoplasmic-facing; the sequence is MARRRRRA. A helical; Signal-anchor for type II membrane protein membrane pass occupies residues 9–29; that stretch reads CIALFLVLLFAFGTLMGLRTL. The Lumenal segment spans residues 30 to 457; the sequence is KAPDGLPALG…FIKEKEQWLM (428 aa). Residues 46–93 form a disordered region; it reads PFERRPEGAPAPAARAPAAPAAPPPPPPPPRTADPGGSPGPAPAEAEP. Residues 53–64 are compositionally biased toward low complexity; the sequence is GAPAPAARAPAA. Pro residues predominate over residues 65-87; it reads PAAPPPPPPPPRTADPGGSPGPA.

This sequence belongs to the glycosyl hydrolase 99 family.

The protein localises to the golgi apparatus membrane. This is Glycoprotein endo-alpha-1,2-mannosidase-like protein (MANEAL) from Homo sapiens (Human).